A 122-amino-acid polypeptide reads, in one-letter code: UPF0102 protein CTC_01256 (122 aa).

The protein belongs to the UPF0102 family.

The chain is UPF0102 protein CTC_01256 from Clostridium tetani (strain Massachusetts / E88).